The following is a 122-amino-acid chain: Aspartate 1-decarboxylase (122 aa).

The Schiff-base intermediate with substrate; via pyruvic acid role is filled by Ser-25. Ser-25 is subject to Pyruvic acid (Ser). Thr-57 lines the substrate pocket. Tyr-58 (proton donor) is an active-site residue. 73-75 (GAA) provides a ligand contact to substrate.

Belongs to the PanD family. Heterooctamer of four alpha and four beta subunits. Requires pyruvate as cofactor. Is synthesized initially as an inactive proenzyme, which is activated by self-cleavage at a specific serine bond to produce a beta-subunit with a hydroxyl group at its C-terminus and an alpha-subunit with a pyruvoyl group at its N-terminus.

The protein resides in the cytoplasm. It catalyses the reaction L-aspartate + H(+) = beta-alanine + CO2. The protein operates within cofactor biosynthesis; (R)-pantothenate biosynthesis; beta-alanine from L-aspartate: step 1/1. Functionally, catalyzes the pyruvoyl-dependent decarboxylation of aspartate to produce beta-alanine. In Bordetella avium (strain 197N), this protein is Aspartate 1-decarboxylase.